Reading from the N-terminus, the 88-residue chain is Co-chaperonin GroES (88 aa).

Belongs to the GroES chaperonin family. As to quaternary structure, heptamer of 7 subunits arranged in a ring. Interacts with the chaperonin GroEL.

It is found in the cytoplasm. In terms of biological role, together with the chaperonin GroEL, plays an essential role in assisting protein folding. The GroEL-GroES system forms a nano-cage that allows encapsulation of the non-native substrate proteins and provides a physical environment optimized to promote and accelerate protein folding. GroES binds to the apical surface of the GroEL ring, thereby capping the opening of the GroEL channel. The chain is Co-chaperonin GroES from Treponema denticola (strain ATCC 35405 / DSM 14222 / CIP 103919 / JCM 8153 / KCTC 15104).